We begin with the raw amino-acid sequence, 263 residues long: Glutamate 5-kinase (263 aa).

K15 is an ATP binding site. Substrate contacts are provided by S55, D142, and N154. ATP is bound by residues 174–175 and 216–222; these read SD and TGGIETK.

Belongs to the glutamate 5-kinase family.

It localises to the cytoplasm. The enzyme catalyses L-glutamate + ATP = L-glutamyl 5-phosphate + ADP. Its pathway is amino-acid biosynthesis; L-proline biosynthesis; L-glutamate 5-semialdehyde from L-glutamate: step 1/2. Functionally, catalyzes the transfer of a phosphate group to glutamate to form L-glutamate 5-phosphate. The polypeptide is Glutamate 5-kinase (Alkaliphilus oremlandii (strain OhILAs) (Clostridium oremlandii (strain OhILAs))).